We begin with the raw amino-acid sequence, 361 residues long: Tyrosine--tRNA ligase (361 aa).

Residues Y36, Y162, Q166, D169, and Q184 each coordinate L-tyrosine. The 'KMSKS' region signature appears at 236–240 (KMSKS). K239 serves as a coordination point for ATP.

It belongs to the class-I aminoacyl-tRNA synthetase family. TyrS type 4 subfamily. In terms of assembly, homodimer.

Its subcellular location is the cytoplasm. It carries out the reaction tRNA(Tyr) + L-tyrosine + ATP = L-tyrosyl-tRNA(Tyr) + AMP + diphosphate + H(+). In terms of biological role, catalyzes the attachment of tyrosine to tRNA(Tyr) in a two-step reaction: tyrosine is first activated by ATP to form Tyr-AMP and then transferred to the acceptor end of tRNA(Tyr). The sequence is that of Tyrosine--tRNA ligase from Saccharolobus islandicus (strain L.S.2.15 / Lassen #1) (Sulfolobus islandicus).